The primary structure comprises 536 residues: Anthranilate synthase component 1 2 (536 aa).

L-tryptophan contacts are provided by residues serine 59 and 299–301; that span reads PYM. Chorismate is bound at residue 334–335; it reads GT. Glutamate 361 contributes to the Mg(2+) binding site. Chorismate contacts are provided by residues tyrosine 449, arginine 469, 487-489, and glycine 489; that span reads GAG. Residue glutamate 502 participates in Mg(2+) binding.

The protein belongs to the anthranilate synthase component I family. As to quaternary structure, tetramer of two components I and two components II. Mg(2+) serves as cofactor.

The enzyme catalyses chorismate + L-glutamine = anthranilate + pyruvate + L-glutamate + H(+). It functions in the pathway amino-acid biosynthesis; L-tryptophan biosynthesis; L-tryptophan from chorismate: step 1/5. This chain is Anthranilate synthase component 1 2 (trpE2), found in Haloarcula marismortui (strain ATCC 43049 / DSM 3752 / JCM 8966 / VKM B-1809) (Halobacterium marismortui).